The chain runs to 399 residues: Tyrosine--tRNA ligase (399 aa).

Residues 42-51 carry the 'HIGH' region motif; that stretch reads PTAPDLHLGH. Positions 226–230 match the 'KMSKS' region motif; that stretch reads KMSKS. Lys229 contributes to the ATP binding site. The region spanning 337–398 is the S4 RNA-binding domain; it reads IAIANLLKDA…GKRKFARITV (62 aa).

The protein belongs to the class-I aminoacyl-tRNA synthetase family. TyrS type 2 subfamily. In terms of assembly, homodimer.

It is found in the cytoplasm. The enzyme catalyses tRNA(Tyr) + L-tyrosine + ATP = L-tyrosyl-tRNA(Tyr) + AMP + diphosphate + H(+). Functionally, catalyzes the attachment of tyrosine to tRNA(Tyr) in a two-step reaction: tyrosine is first activated by ATP to form Tyr-AMP and then transferred to the acceptor end of tRNA(Tyr). In Colwellia psychrerythraea (strain 34H / ATCC BAA-681) (Vibrio psychroerythus), this protein is Tyrosine--tRNA ligase.